A 265-amino-acid polypeptide reads, in one-letter code: Deoxycytidine kinase 2 (265 aa).

31-39 is a binding site for ATP; that stretch reads GNIAAGKST. 3 residues coordinate substrate: Glu-56, Tyr-89, and Gln-100. The active-site Proton acceptor is the Glu-130. Substrate-binding residues include Arg-131 and Asp-136. 191 to 195 is an ATP binding site; it reads RLQKR. Substrate is bound at residue Glu-200. 243–245 serves as a coordination point for ATP; the sequence is EDF.

Belongs to the DCK/DGK family. In terms of assembly, homodimer. In terms of tissue distribution, expressed at high levels in adult intestine, spleen, thymus and testis with lower levels in skeletal muscle and eye. In the embryo, expressed at higher levels until day 10 with lower levels in later stages.

Its subcellular location is the nucleus. It carries out the reaction 2'-deoxycytidine + a ribonucleoside 5'-triphosphate = dCMP + a ribonucleoside 5'-diphosphate + H(+). The catalysed reaction is 2'-deoxyguanosine + ATP = dGMP + ADP + H(+). It catalyses the reaction 2'-deoxyadenosine + ATP = dAMP + ADP + H(+). In terms of biological role, phosphorylates the deoxyribonucleosides deoxyadenosine, deoxycytidine and deoxyguanosine. Shows highest activity against deoxyguanosine followed by deoxycytidine and then deoxyadenosine. Shows only very minor activity against deoxyuridine and deoxythymidine. This is Deoxycytidine kinase 2 from Gallus gallus (Chicken).